Consider the following 271-residue polypeptide: Aquaporin-2 (271 aa).

The Cytoplasmic portion of the chain corresponds to 1–11; the sequence is MWELRSIAFSR. A helical membrane pass occupies residues 12–32; sequence AVLAEFLATLLFVFFGLGSAL. Residues 33 to 40 lie on the Extracellular side of the membrane; that stretch reads QWASSPPS. The chain crosses the membrane as a helical span at residues 41-59; that stretch reads VLQIAVAFGLGIGILVQAL. At 60–64 the chain is on the cytoplasmic side; sequence GHVSG. The discontinuously helical intramembrane region spans 65–74; the sequence is AHINPAVTVA. The short motif at 68-70 is the NPA 1 element; it reads NPA. The Cytoplasmic segment spans residues 75-85; it reads CLVGCHVSFLR. Residues 86–107 form a helical membrane-spanning segment; it reads AAFYVAAQLLGAVAGAAILHEI. Residues 108-127 lie on the Extracellular side of the membrane; it reads TPVEIRGDLAVNALHNNATA. Residue Asn124 is glycosylated (N-linked (GlcNAc...) asparagine). A helical transmembrane segment spans residues 128–148; it reads GQAVTVELFLTMQLVLCIFAS. Over 149 to 156 the chain is Cytoplasmic; sequence TDERRGDN. The chain crosses the membrane as a helical span at residues 157 to 176; the sequence is LGSPALSIGFSVTLGHLLGI. Residues 177-180 lie on the Extracellular side of the membrane; it reads YFTG. Residues 181-193 constitute an intramembrane region (discontinuously helical); it reads CSMNPARSLAPAV. The short motif at 184–186 is the NPA 2 element; sequence NPA. Over 194–201 the chain is Extracellular; sequence VTGKFDDH. The chain crosses the membrane as a helical span at residues 202–222; the sequence is WVFWIGPLVGAIIGSLLYNYL. Topologically, residues 223-271 are cytoplasmic; sequence LFPSAKSLQERLAVLKGLEPDTDWEEREVRRRQSVELHSPQSLPRGSKA. The interval 251–271 is disordered; sequence VRRRQSVELHSPQSLPRGSKA. Ser256, Ser261, Ser264, and Ser269 each carry phosphoserine. Positions 261-271 are enriched in polar residues; the sequence is SPQSLPRGSKA.

The protein belongs to the MIP/aquaporin (TC 1.A.8) family. As to quaternary structure, homotetramer. In terms of processing, ser-256 phosphorylation is necessary and sufficient for expression at the apical membrane. Endocytosis is not phosphorylation-dependent. N-glycosylated. In terms of tissue distribution, detected in kidney, in cortical and the medullary collecting tubules (at protein level). Detected in kidney medulla and cortex.

It localises to the apical cell membrane. Its subcellular location is the basolateral cell membrane. The protein resides in the cell membrane. It is found in the cytoplasmic vesicle membrane. The protein localises to the golgi apparatus. It localises to the trans-Golgi network membrane. The enzyme catalyses H2O(in) = H2O(out). It catalyses the reaction glycerol(in) = glycerol(out). In terms of biological role, forms a water-specific channel that provides the plasma membranes of renal collecting duct with high permeability to water, thereby permitting water to move in the direction of an osmotic gradient. Plays an essential role in renal water homeostasis. Could also be permeable to glycerol. This chain is Aquaporin-2, found in Rattus norvegicus (Rat).